The chain runs to 221 residues: Probable septum site-determining protein MinC (221 aa).

It belongs to the MinC family. As to quaternary structure, interacts with MinD and FtsZ.

Functionally, cell division inhibitor that blocks the formation of polar Z ring septums. Rapidly oscillates between the poles of the cell to destabilize FtsZ filaments that have formed before they mature into polar Z rings. Prevents FtsZ polymerization. This chain is Probable septum site-determining protein MinC, found in Shewanella woodyi (strain ATCC 51908 / MS32).